A 230-amino-acid polypeptide reads, in one-letter code: UPF0758 protein plu4865 (230 aa).

Residues 108-230 form the MPN domain; the sequence is IMSSPSVTQE…CVSFAERGWI (123 aa). 3 residues coordinate Zn(2+): His179, His181, and Asp192. The JAMM motif signature appears at 179–192; the sequence is HNHPSGHAEPSLAD.

Belongs to the UPF0758 family. YicR subfamily.

The protein is UPF0758 protein plu4865 of Photorhabdus laumondii subsp. laumondii (strain DSM 15139 / CIP 105565 / TT01) (Photorhabdus luminescens subsp. laumondii).